A 422-amino-acid chain; its full sequence is Histidine--tRNA ligase (422 aa).

The protein belongs to the class-II aminoacyl-tRNA synthetase family. As to quaternary structure, homodimer.

Its subcellular location is the cytoplasm. It catalyses the reaction tRNA(His) + L-histidine + ATP = L-histidyl-tRNA(His) + AMP + diphosphate + H(+). In Onion yellows phytoplasma (strain OY-M), this protein is Histidine--tRNA ligase.